The chain runs to 190 residues: MAKEKQEEQQKQTAPENEKAPKKDIKKEASDKKGDQTSKLKEEIADLKKQLADKDDKYLRAEAEIQNMTNRFNKERAQILKYDGQDLAKSILPVLDNLKRALAIEVVDDNGKQLKKGIQMVHDHLVKALNDHGITEIKADGETFDPTLHQAVQTVPVEEGQKPETVVNVLQAGYQLKDRVLRPAMVVVAQ.

The tract at residues 1-41 is disordered; sequence MAKEKQEEQQKQTAPENEKAPKKDIKKEASDKKGDQTSKLK.

It belongs to the GrpE family. In terms of assembly, homodimer.

It localises to the cytoplasm. Functionally, participates actively in the response to hyperosmotic and heat shock by preventing the aggregation of stress-denatured proteins, in association with DnaK and GrpE. It is the nucleotide exchange factor for DnaK and may function as a thermosensor. Unfolded proteins bind initially to DnaJ; upon interaction with the DnaJ-bound protein, DnaK hydrolyzes its bound ATP, resulting in the formation of a stable complex. GrpE releases ADP from DnaK; ATP binding to DnaK triggers the release of the substrate protein, thus completing the reaction cycle. Several rounds of ATP-dependent interactions between DnaJ, DnaK and GrpE are required for fully efficient folding. This chain is Protein GrpE, found in Limosilactobacillus reuteri (strain DSM 20016) (Lactobacillus reuteri).